A 379-amino-acid polypeptide reads, in one-letter code: Chaperone protein DnaJ (379 aa).

Residues 5-69 (EYYERLGVDK…QKRAAYDQYG (65 aa)) form the J domain. A CR-type zinc finger spans residues 141 to 223 (GVEKQVKYNR…CHGSGHEKVA (83 aa)). Zn(2+) contacts are provided by C154, C157, C171, C174, C197, C200, and C214. CXXCXGXG motif repeat units lie at residues 154–161 (CHTCGGSG), 171–178 (CHKCGGRG), 197–204 (CDVCHGTG), and 211–218 (STTCHGSG).

Belongs to the DnaJ family. As to quaternary structure, homodimer. Zn(2+) is required as a cofactor.

It is found in the cytoplasm. Participates actively in the response to hyperosmotic and heat shock by preventing the aggregation of stress-denatured proteins and by disaggregating proteins, also in an autonomous, DnaK-independent fashion. Unfolded proteins bind initially to DnaJ; upon interaction with the DnaJ-bound protein, DnaK hydrolyzes its bound ATP, resulting in the formation of a stable complex. GrpE releases ADP from DnaK; ATP binding to DnaK triggers the release of the substrate protein, thus completing the reaction cycle. Several rounds of ATP-dependent interactions between DnaJ, DnaK and GrpE are required for fully efficient folding. Also involved, together with DnaK and GrpE, in the DNA replication of plasmids through activation of initiation proteins. This Lactococcus lactis subsp. cremoris (Streptococcus cremoris) protein is Chaperone protein DnaJ.